A 274-amino-acid chain; its full sequence is Large ribosomal subunit protein uL2 (274 aa).

2 disordered regions span residues 36 to 61 and 223 to 274; these read QKSK…HKQR and VAMN…RRKR. Residues 37-46 are compositionally biased toward polar residues; that stretch reads KSKTGGRNSN. Composition is skewed to basic residues over residues 50–61 and 254–274; these read TTRHRGGGHKQR and KGHK…RRKR.

Belongs to the universal ribosomal protein uL2 family. As to quaternary structure, part of the 50S ribosomal subunit. Forms a bridge to the 30S subunit in the 70S ribosome.

Its function is as follows. One of the primary rRNA binding proteins. Required for association of the 30S and 50S subunits to form the 70S ribosome, for tRNA binding and peptide bond formation. It has been suggested to have peptidyltransferase activity; this is somewhat controversial. Makes several contacts with the 16S rRNA in the 70S ribosome. In Halorhodospira halophila (strain DSM 244 / SL1) (Ectothiorhodospira halophila (strain DSM 244 / SL1)), this protein is Large ribosomal subunit protein uL2.